Here is a 208-residue protein sequence, read N- to C-terminus: 2-dehydro-3-deoxy-phosphogluconate aldolase (208 aa).

Glutamate 41 (proton acceptor) is an active-site residue. Pyruvate is bound by residues arginine 45, threonine 68, and lysine 128. Lysine 128 functions as the Schiff-base intermediate with substrate in the catalytic mechanism.

Belongs to the KHG/KDPG aldolase family. In terms of assembly, homotrimer.

Its subcellular location is the cytoplasm. It catalyses the reaction 2-dehydro-3-deoxy-6-phospho-D-gluconate = D-glyceraldehyde 3-phosphate + pyruvate. Its pathway is carbohydrate acid metabolism; 2-dehydro-3-deoxy-D-gluconate degradation; D-glyceraldehyde 3-phosphate and pyruvate from 2-dehydro-3-deoxy-D-gluconate: step 2/2. Involved in the degradation of glucose via the Entner-Doudoroff pathway. Catalyzes the reversible, stereospecific retro-aldol cleavage of 2-keto-3-deoxy-6-phosphogluconate (KDPG) to pyruvate and D-glyceraldehyde-3-phosphate. This Zymomonas mobilis subsp. mobilis (strain ATCC 31821 / ZM4 / CP4) protein is 2-dehydro-3-deoxy-phosphogluconate aldolase.